The sequence spans 409 residues: MASGKAAGKTDAPTPVIKLGGPKPPKVGSSGNVSWFQAIKAKKLNSPPPKFEGSGVPDNENLKPSQQHGYWRRQARFKPGKGGRKPVPDAWYFYYTGTGPAANLNWGDSQDGIVWVAGKGADTKFRSNQGTRDSDKFDQYPLRFSDGGPDGNFRWDFIPLNRGRSGRSTAASSAASSRAPSREVSRGRRSGSEDDLIARAARIIQDQQKKGSRITKAKADEMAHRRYCKRTIPPNYKVDQVFGPRTKGKEGNFGDDKMNEEGIKDGRVTAMLNLVPSSHACLFGSRVTPRLQPDGLHLKFEFTTVVPRDDPQFDNYVKICDQCVDGVGTRPKDDEPRPKSRSSSRPATRGNSPAPRQQRPKKEKKPKKQDDEVDKALTSDEERNNAQLEFDDEPKVINWGDSALGENEL.

4 disordered regions span residues 1–31 (MASGKAAGKTDAPTPVIKLGGPKPPKVGSSG), 44–84 (LNSP…KGGR), 164–196 (RSGRSTAASSAASSRAPSREVSRGRRSGSEDDL), and 238–258 (VDQVFGPRTKGKEGNFGDDKM). Low complexity predominate over residues 15–31 (PVIKLGGPKPPKVGSSG). The RNA-binding stretch occupies residues 29–160 (SSGNVSWFQA…GNFRWDFIPL (132 aa)). The CoV N NTD domain maps to 31–156 (GNVSWFQAIK…GGPDGNFRWD (126 aa)). Positions 70 to 84 (YWRRQARFKPGKGGR) are enriched in basic residues. The span at 166 to 179 (GRSTAASSAASSRA) shows a compositional bias: low complexity. 2 stretches are compositionally biased toward basic and acidic residues: residues 180–192 (PSREVSRGRRSGS) and 247–258 (KGKEGNFGDDKM). A phosphoserine; by host mark is found at Ser190 and Ser192. Residues 215–331 (TKAKADEMAH…QCVDGVGTRP (117 aa)) form the CoV N CTD domain. Positions 226–333 (RYCKRTIPPN…VDGVGTRPKD (108 aa)) are dimerization. Cys320 and Cys323 are joined by a disulfide. The segment at 326 to 409 (GVGTRPKDDE…GDSALGENEL (84 aa)) is disordered. Positions 358–367 (QRPKKEKKPK) are enriched in basic residues. Positions 368–384 (KQDDEVDKALTSDEERN) are enriched in basic and acidic residues. Thr378 carries the phosphothreonine; by host modification. Ser379 bears the Phosphoserine; by host mark.

Belongs to the gammacoronavirus nucleocapsid protein family. Homooligomer. Both monomeric and oligomeric forms interact with RNA. Interacts with protein M. Interacts with NSP3; this interaction serves to tether the genome to the newly translated replicase-transcriptase complex at a very early stage of infection. In terms of processing, ADP-ribosylated. The ADP-ribosylation is retained in the virion during infection. Post-translationally, phosphorylated on serine and threonine residues.

The protein localises to the virion. The protein resides in the host endoplasmic reticulum-Golgi intermediate compartment. Its subcellular location is the host Golgi apparatus. Packages the positive strand viral genome RNA into a helical ribonucleocapsid (RNP) and plays a fundamental role during virion assembly through its interactions with the viral genome and membrane protein M. Plays an important role in enhancing the efficiency of subgenomic viral RNA transcription as well as viral replication. This chain is Nucleoprotein, found in Gallus gallus (Chicken).